We begin with the raw amino-acid sequence, 1072 residues long: RIMS-binding protein 2 (1072 aa).

The SH3 1 domain occupies 181 to 248 (GKVHLCVARY…PSNFVDFIQD (68 aa)). Fibronectin type-III domains lie at 311–404 (VPYP…GKDV), 407–489 (APSQ…KKEA), and 503–604 (PPQD…VPPA). Disordered regions lie at residues 597–681 (PDLL…APVS) and 713–800 (SAGQ…TSHN). A compositionally biased stretch (pro residues) spans 599–615 (LLVPPAPHPRTAPPPKP). Over residues 620–635 (MDTKDQHLGPHVKVDE) the composition is skewed to basic and acidic residues. Residues 660–670 (GPGRRSPSPSR) show a composition bias toward low complexity. Phosphoserine is present on residues Ser-720 and Ser-728. 2 stretches are compositionally biased toward basic and acidic residues: residues 730–743 (EVKR…DFLK) and 754–765 (CHGDEYHTESSR). Residues 771-781 (DIMEEDEEELY) are compositionally biased toward acidic residues. Phosphoserine is present on residues Ser-852 and Ser-859. Thr-861 carries the post-translational modification Phosphothreonine. 2 SH3 domains span residues 868-936 (LPAR…EIHA) and 972-1039 (VPTR…EVPD). The tract at residues 1044-1072 (HLSDAPPHYSHDPPMRSKAKRKKSVHFTP) is disordered. A compositionally biased stretch (basic residues) spans 1060 to 1072 (SKAKRKKSVHFTP).

It belongs to the RIMBP family. As to quaternary structure, interacts with RIMS1, RIMS2, CACNA1D and CACNA1B, and potentially with other Ca(2+) channel alpha-1 isoforms.

It localises to the cell membrane. The protein localises to the synapse. Its function is as follows. Plays a role in the synaptic transmission as bifunctional linker that interacts simultaneously with RIMS1, RIMS2, CACNA1D and CACNA1B. This Mus musculus (Mouse) protein is RIMS-binding protein 2 (Rimbp2).